A 243-amino-acid polypeptide reads, in one-letter code: Ribonuclease PH (243 aa).

Phosphate contacts are provided by residues Arg-91 and 129-131 (GTR).

The protein belongs to the RNase PH family. In terms of assembly, homohexameric ring arranged as a trimer of dimers.

It catalyses the reaction tRNA(n+1) + phosphate = tRNA(n) + a ribonucleoside 5'-diphosphate. In terms of biological role, phosphorolytic 3'-5' exoribonuclease that plays an important role in tRNA 3'-end maturation. Removes nucleotide residues following the 3'-CCA terminus of tRNAs; can also add nucleotides to the ends of RNA molecules by using nucleoside diphosphates as substrates, but this may not be physiologically important. Probably plays a role in initiation of 16S rRNA degradation (leading to ribosome degradation) during starvation. This is Ribonuclease PH from Burkholderia thailandensis (strain ATCC 700388 / DSM 13276 / CCUG 48851 / CIP 106301 / E264).